We begin with the raw amino-acid sequence, 412 residues long: Tyrosine--tRNA ligase (412 aa).

Tyr38 is a binding site for L-tyrosine. The 'HIGH' region signature appears at 43-52 (CTANSLHIGS). Residues Tyr170 and Gln174 each contribute to the L-tyrosine site. The short motif at 230–234 (KMGKT) is the 'KMSKS' region element. Lys233 provides a ligand contact to ATP. Residues 343–409 (IPISKLLHMW…CGKKRRLKVV (67 aa)) form the S4 RNA-binding domain.

Belongs to the class-I aminoacyl-tRNA synthetase family. TyrS type 1 subfamily. As to quaternary structure, homodimer.

It is found in the cytoplasm. The enzyme catalyses tRNA(Tyr) + L-tyrosine + ATP = L-tyrosyl-tRNA(Tyr) + AMP + diphosphate + H(+). Functionally, catalyzes the attachment of tyrosine to tRNA(Tyr) in a two-step reaction: tyrosine is first activated by ATP to form Tyr-AMP and then transferred to the acceptor end of tRNA(Tyr). The protein is Tyrosine--tRNA ligase of Anaplasma phagocytophilum (strain HZ).